A 64-amino-acid polypeptide reads, in one-letter code: Beta-defensin 5 (64 aa).

An N-terminal signal peptide occupies residues 1–23 (MKIHYLLFAFLLVLLSPLAGVFS). Disulfide bonds link cysteine 32–cysteine 60, cysteine 39–cysteine 53, and cysteine 43–cysteine 61.

It belongs to the beta-defensin family.

Its subcellular location is the secreted. In terms of biological role, has antibacterial activity. The protein is Beta-defensin 5 (Defb5) of Mus musculus (Mouse).